A 55-amino-acid polypeptide reads, in one-letter code: Large ribosomal subunit protein bL33 (55 aa).

The protein belongs to the bacterial ribosomal protein bL33 family.

This Azoarcus sp. (strain BH72) protein is Large ribosomal subunit protein bL33.